Reading from the N-terminus, the 293-residue chain is Bisanhydrobacterioruberin hydratase (293 aa).

A run of 7 helical transmembrane segments spans residues 36–56 (IAVV…EGLL), 66–86 (FVLF…FPLV), 89–109 (RAGL…LVGV), 134–154 (FGLP…VLLL), 171–191 (ATVM…GFWI), 199–219 (GVPW…VLLF), and 254–274 (LFYT…GLLW).

Belongs to the BABR hydratase family.

It localises to the membrane. It catalyses the reaction bacterioruberin = bisanhydrobacterioruberin + 2 H2O. The protein operates within carotenoid biosynthesis. Functionally, involved in the biosynthesis of the acyclic C50 carotenoid bacterioruberin (BR). Catalyzes the reaction that introduces hydroxyl groups to C3'' and C3''' of bisanhydrobacterioruberin (BABR) to generate BR. In Haloarcula japonica (strain ATCC 49778 / DSM 6131 / JCM 7785 / NBRC 101032 / NCIMB 13157 / TR-1), this protein is Bisanhydrobacterioruberin hydratase.